The sequence spans 317 residues: Acetyl-coenzyme A carboxylase carboxyl transferase subunit alpha (317 aa).

The CoA carboxyltransferase C-terminal domain occupies 33–294 (NLDDEITRLQ…KKRLLADLAD (262 aa)).

Belongs to the AccA family. In terms of assembly, acetyl-CoA carboxylase is a heterohexamer composed of biotin carboxyl carrier protein (AccB), biotin carboxylase (AccC) and two subunits each of ACCase subunit alpha (AccA) and ACCase subunit beta (AccD).

It is found in the cytoplasm. The catalysed reaction is N(6)-carboxybiotinyl-L-lysyl-[protein] + acetyl-CoA = N(6)-biotinyl-L-lysyl-[protein] + malonyl-CoA. It participates in lipid metabolism; malonyl-CoA biosynthesis; malonyl-CoA from acetyl-CoA: step 1/1. Its function is as follows. Component of the acetyl coenzyme A carboxylase (ACC) complex. First, biotin carboxylase catalyzes the carboxylation of biotin on its carrier protein (BCCP) and then the CO(2) group is transferred by the carboxyltransferase to acetyl-CoA to form malonyl-CoA. The polypeptide is Acetyl-coenzyme A carboxylase carboxyl transferase subunit alpha (Histophilus somni (strain 129Pt) (Haemophilus somnus)).